The primary structure comprises 242 residues: Small ribosomal subunit protein uS2 (242 aa).

This sequence belongs to the universal ribosomal protein uS2 family.

In Shouchella clausii (strain KSM-K16) (Alkalihalobacillus clausii), this protein is Small ribosomal subunit protein uS2.